The sequence spans 2499 residues: Polyprotein P1234 (2499 aa).

The Alphavirus-like MT domain occupies 30 to 260 (VAQQVTPNDH…ENRADLQSWH (231 aa)). The nsP1 membrane-binding stretch occupies residues 245–264 (GSTLYPENRADLQSWHLPSV). Cys-420 carries S-palmitoyl cysteine; by host lipidation. In terms of domain architecture, (+)RNA virus helicase ATP-binding spans 694–849 (ELTNPPYHEL…RDLCTSTHYK (156 aa)). Residue 725-732 (GTPGSGKS) participates in a ribonucleoside 5'-triphosphate binding. The (+)RNA virus helicase C-terminal domain occupies 850–998 (YISRRCTQPV…LEEWQAEHED (149 aa)). The 329-residue stretch at 1011–1339 (DPFASKVNTC…LAVSNIFDNY (329 aa)) folds into the Peptidase C9 domain. The nucleolus localization signal stretch occupies residues 1012–1031 (PFASKVNTCWAKAIIPILRT). Residue Cys-1020 is the For cysteine protease nsP2 activity of the active site. A Nuclear export signal motif is present at residues 1065 to 1074 (TKMFGMDLSS). His-1097 serves as the catalytic For cysteine protease nsP2 activity. Residues 1194–1198 (VSKRI) carry the Nuclear localization signal motif. A Macro domain is found at 1346 to 1505 (APSYRVKRMN…RIADAIRMRE (160 aa)). ADP-D-ribose-binding residues include Asn-1369, Gly-1377, Gly-1457, Ile-1458, and Tyr-1459. Cys-1608, Cys-1610, Cys-1633, and Cys-1651 together coordinate Zn(2+). Short sequence motifs (FGDF; binding to host G3BP1) lie at residues 1845-1848 (FGDF) and 1865-1868 (FGDF). The RdRp catalytic domain maps to 2253-2368 (HPVLETDIGS…HGVVSDKIMA (116 aa)).

In terms of assembly, interacts with non-structural protein 3. Interacts with RNA-directed RNA polymerase nsP4. Interacts with protease nsP2. interacts with itself. As to quaternary structure, interacts with mRNA-capping enzyme nsP1. Interacts with host DDX1. Interacts with host DDX3. Interacts (via C-terminus) with host G3BP1; this interaction inhibits the formation of host stress granules on viral mRNAs and the nsp3-G3BP1 complexes bind viral RNAs and probably orchestrate the assembly of viral replication complexes. Interacts (via C-terminus) with host G3BP2; this interaction inhibits the formation of host stress granules on viral mRNAs and the nsp3-G3BP2 complexes bind viral RNAs and probably orchestrate the assembly of viral replication complexes. Interacts with mRNA-capping enzyme nsP1. Interacts with protease nsP2. interacts with itself. In terms of assembly, interacts with RNA-directed RNA polymerase nsP4. Interacts with mRNA-capping enzyme nsP1. Interacts with KPNA1/karyopherin-alpha1; this interaction probably allows the active transport of protease nsP2 into the host nucleus. The cofactor is Mg(2+). It depends on Mn(2+) as a cofactor. Post-translationally, specific enzymatic cleavages in vivo yield mature proteins. The processing of the polyprotein is temporally regulated. In early stages (1.7 hpi), P1234 is first cleaved in trans through its nsP2 protease activity, releasing P123' and nsP4, which associate to form the early replication complex. At the same time, P1234 is also cut at the nsP1/nsP2 site early in infection but with lower efficiency. After replication of the viral minus-strand RNAs (4 hpi), the polyproteins are cut at the nsP1/nsP2 and nsP2/nsP3 sites very efficiently, preventing accumulation of P123' and P1234 and allowing the formation of the late replication complex. NsP3'/nsP4 site is not cleaved anymore and P34 is produced rather than nsP4. In terms of processing, specific enzymatic cleavages in vivo yield mature proteins. The processing of the polyprotein is temporally regulated. In early stages (1.7 hpi), P123 is cleaved at the nsP1/nsP2 site with low efficiency. After replication of the viral minus-strand RNAs (4 hpi), the polyproteins are cut at the nsP1/nsP2 and nsP2/nsP3 sites very efficiently, preventing accumulation of P123 and allowing the formation of the late replication complex. Specific enzymatic cleavages in vivo yield mature proteins. The processing of the polyprotein is temporally regulated. In early stages (1.7 hpi), P123' is cleaved at the nsP1/nsP2 site with low efficiency. After replication of the viral minus-strand RNAs (4 hpi), the polyproteins are cut at the nsP1/nsP2 and nsP2/nsP3 sites very efficiently, preventing accumulation of P123' and allowing the formation of the late replication complex. Post-translationally, palmitoylated by host palmitoyltransferases ZDHHC2 and ZDHHC19. In terms of processing, phosphorylated by host on serines and threonines. Ubiquitinated; targets the protein for rapid degradation via the ubiquitin system. Nsp4 is present in extremely low quantities due to low frequency of translation through the amber stop-codon and the degradation by the ubiquitin pathway.

It is found in the host cytoplasmic vesicle membrane. The protein resides in the host cell membrane. The protein localises to the host cell projection. Its subcellular location is the host filopodium. It localises to the host nucleus. It is found in the host cytoplasm. The catalysed reaction is GTP + S-adenosyl-L-methionine = N(7)-methyl-GTP + S-adenosyl-L-homocysteine. The enzyme catalyses N(7)-methyl-GTP + L-histidyl-[protein] = N(tele)-(N(7)-methylguanosine 5'-phospho)-L-histidyl-[protein] + diphosphate. It carries out the reaction N(tele)-(N(7)-methylguanosine 5'-phospho)-L-histidyl-[protein] + a 5'-end diphospho-(purine-ribonucleoside) in mRNA + H(+) = a 5'-end (N(7)-methyl 5'-triphosphoguanosine)-(purine-ribonucleoside) in mRNA + L-histidyl-[protein]. It catalyses the reaction a 5'-end triphospho-ribonucleoside in mRNA + H2O = a 5'-end diphospho-ribonucleoside in mRNA + phosphate + H(+). The catalysed reaction is a ribonucleoside 5'-triphosphate + H2O = a ribonucleoside 5'-diphosphate + phosphate + H(+). The enzyme catalyses ATP + H2O = ADP + phosphate + H(+). It carries out the reaction RNA(n) + a ribonucleoside 5'-triphosphate = RNA(n+1) + diphosphate. It catalyses the reaction RNA(n) + ATP = RNA(n)-3'-adenine ribonucleotide + diphosphate. The catalysed reaction is 4-O-(ADP-D-ribosyl)-L-aspartyl-[protein] + H2O = L-aspartyl-[protein] + ADP-D-ribose + H(+). The enzyme catalyses 5-O-(ADP-D-ribosyl)-L-glutamyl-[protein] + H2O = L-glutamyl-[protein] + ADP-D-ribose + H(+). It carries out the reaction ADP-alpha-D-ribose 1''-phosphate + H2O = ADP-D-ribose + phosphate. Its function is as follows. Inactive precursor of the viral replicase, which is activated by cleavages carried out by the viral protease nsP2. Functionally, the early replication complex formed by the polyprotein P123 and nsP4 synthesizes minus-strand RNAs. As soon P123 is cleaved into mature proteins, the plus-strand RNAs synthesis begins. The early replication complex formed by the polyprotein P123' and nsP4 synthesizes minus-strand RNAs. Polyprotein P123' is a short-lived polyprotein that accumulates during early stage of infection. As soon P123' is cleaved into mature proteins, the plus-strand RNAs synthesis begins. In terms of biological role, cytoplasmic capping enzyme that catalyzes two virus-specific reactions: methyltransferase and nsP1 guanylyltransferase. mRNA-capping is necessary since all viral RNAs are synthesized in the cytoplasm, and host capping enzymes are restricted to the nucleus. The enzymatic reaction involves a covalent link between 7-methyl-GMP and nsP1, whereas eukaryotic capping enzymes form a covalent complex only with GMP. nsP1 capping consists in the following reactions: GTP is first methylated into 7-methyl-GMP and then is covalently linked to nsP1 to form the m7GMp-nsP1 complex from which 7-methyl-GMP complex is transferred to the mRNA to create the cap structure. NsP1 is needed for the initiation of the minus-strand RNAs synthesis. Probably serves as a membrane anchor for the replication complex composed of nsP1-nsP4. Palmitoylated nsP1 is remodeling host cell cytoskeleton, and induces filopodium-like structure formation at the surface of the host cell. Its function is as follows. Multifunctional protein whose N-terminus is part of the RNA polymerase complex and displays NTPase, RNA triphosphatase and helicase activities. NTPase and RNA triphosphatase are involved in viral RNA capping and helicase keeps a check on the dsRNA replication intermediates. The C-terminus harbors a protease that specifically cleaves the polyproteins and releases the mature proteins. Required for the shutoff of minus-strand RNAs synthesis. Specifically inhibits the host IFN response by promoting the nuclear export of host STAT1. Also inhibits host transcription by inducing rapid proteasome-dependent degradation of POLR2A, a catalytic subunit of the RNAPII complex. The resulting inhibition of cellular protein synthesis serves to ensure maximal viral gene expression and to evade host immune response. Functionally, seems to be essential for minus-strand RNAs and subgenomic 26S mRNAs synthesis. Displays mono-ADP-ribosylhydrolase activity. ADP-ribosylation is a post-translational modification that controls various processes of the host cell and the virus probably needs to revert it for optimal viral replication. Binds proteins of FXR family and sequesters them into the viral RNA replication complexes thereby inhibiting the formation of host stress granules on viral mRNAs. The nsp3'-FXR complexes bind viral RNAs and probably orchestrate the assembly of viral replication complexes, thanks to the ability of FXR family members to self-assemble and bind DNA. Seems to be essential for minus-strand RNAs and subgenomic 26S mRNAs synthesis. Displays mono-ADP-ribosylhydrolase activity. ADP-ribosylation is a post-translantional modification that controls various processes of the host cell and the virus probably needs to revert it for optimal viral replication. Binds proteins of G3BP family and sequesters them into the viral RNA replication complexes thereby inhibiting the formation of host stress granules on viral mRNAs. The nsp3-G3BP complexes bind viral RNAs and probably orchestrate the assembly of viral replication complexes, thanks to the ability of G3BP family members to self-assemble and bind DNA. In terms of biological role, RNA dependent RNA polymerase. Replicates genomic and antigenomic RNA by recognizing replications specific signals. The early replication complex formed by the polyprotein P123 and nsP4 synthesizes minus-strand RNAs. The late replication complex composed of fully processed nsP1-nsP4 is responsible for the production of genomic and subgenomic plus-strand RNAs. The core catalytic domain of nsP4 also possesses terminal adenylyltransferase (TATase) activity that is probably involved in maintenance and repair of the poly(A) tail, an element required for replication of the viral genome. This chain is Polyprotein P1234, found in Aura virus (AURAV).